The chain runs to 266 residues: Gasdermin bGSDM (266 aa).

Cysteine 6 carries the S-palmitoyl cysteine lipid modification. Transmembrane regions (beta stranded) follow at residues 70–86, 99–117, 163–180, and 189–205; these read ISHS…AGNF, APKL…FSFS, AIDM…DVQA, and LGGK…TISF. The tract at residues 245-266 is C-terminal region; sequence GAAEPYLLRRGQVLIVEDMQAT.

It belongs to the bacterial gasdermin family. Monomer. As to quaternary structure, forms large, homooligomeric ring-shaped pores when inserted in membranes. In terms of processing, cleavage by the adjacently encoded protease (probably ISF6_0256) predicted to occur between Glu-244 and Gly-245 relieves autoinhibition, releasing the N-terminus which initiates loss of cell integrity. Palmitoylation helps stabilize the inactive state; may self palmitoylate. Palmitoylation plays a significant role in pore formation.

The protein localises to the cytoplasm. The protein resides in the cell inner membrane. The full-length protein before cleavage is inactive: intramolecular interactions between the N-terminal domain and the C-terminal region as well as the lipid modification, mediate autoinhibition. The pyroptosis-like-inducing activity is carried by the released N-terminal domain (Gasdermin bGSDM, N-terminus). Precursor of a pore-forming protein involved in defense against bacteriophages. Cleavage of this precursor by its dedicated, neighboring protease (probably ISF6_0256) releases the active moiety (gasdermin bGSDM, N-terminus) which inserts into membranes, forming pores and triggering cell death. Functionally, pore-forming protein that causes membrane permeabilization via a pyroptosis-like activity. Makes ring-like pores with an interior pore diameter of 300-400 Angstroms, when integrated in liposomes. The sequence is that of Gasdermin bGSDM from Piscinibacter sakaiensis (Ideonella sakaiensis).